The primary structure comprises 222 residues: Probable fimbrial chaperone EcpB (222 aa).

A signal peptide spans 1 to 20; that stretch reads MKKHLLPLALLFSGISPAQA.

Belongs to the EcpB/EcpE family.

Functionally, part of the ecpRABCDE operon, which encodes the E.coli common pilus (ECP). ECP is found in both commensal and pathogenic strains and plays a dual role in early-stage biofilm development and host cell recognition. The polypeptide is Probable fimbrial chaperone EcpB (ecpB) (Escherichia coli O127:H6 (strain E2348/69 / EPEC)).